Consider the following 104-residue polypeptide: MQSQNIRIRLKAFDYRVLDASTQEIVNTAKRTGAQVRGPIPLPNKIEKFTVLRGPHVDKKSRDQFEIRTHKRLLDIVDPTPQTVDALMKLDLAAGVDVEIKLQS.

Belongs to the universal ribosomal protein uS10 family. Part of the 30S ribosomal subunit.

Its function is as follows. Involved in the binding of tRNA to the ribosomes. The protein is Small ribosomal subunit protein uS10 of Ruegeria pomeroyi (strain ATCC 700808 / DSM 15171 / DSS-3) (Silicibacter pomeroyi).